The chain runs to 942 residues: Netrin receptor UNC5B-b (942 aa).

Residues M1–A30 form the signal peptide. The Extracellular segment spans residues G31–Y380. One can recognise an Ig-like domain in the interval P51 to Y148. 9 disulfide bridges follow: C72–C133, C84–C131, C177–C228, C261–C298, C265–C302, C276–C288, C317–C351, C321–C356, and C329–C341. Residues R150–I245 form the Ig-like C2-type domain. The N-linked (GlcNAc...) asparagine glycan is linked to N225. TSP type-1 domains lie at N249–P303 and D305–M357. N-linked (GlcNAc...) asparagine glycosylation occurs at N350. Residues A381–V401 form a helical membrane-spanning segment. Residues Y402 to C942 lie on the Cytoplasmic side of the membrane. The ZU5 domain maps to N541–S684. Residues R687–P835 form a UPA domain region. The Death domain occupies I863–G940.

This sequence belongs to the unc-5 family. As to quaternary structure, interacts (via extracellular domain) with flrt3 (via extracellular domain). Interacts with rnd1.

It localises to the cell membrane. Its function is as follows. Plays a role in cell-cell adhesion during embryonic development. Receptor for netrin required for axon guidance. Mediates axon repulsion of neuronal growth cones in the developing nervous system upon ligand binding. The sequence is that of Netrin receptor UNC5B-b from Xenopus laevis (African clawed frog).